A 560-amino-acid chain; its full sequence is 2-succinyl-5-enolpyruvyl-6-hydroxy-3-cyclohexene-1-carboxylate synthase (560 aa).

This sequence belongs to the TPP enzyme family. MenD subfamily. In terms of assembly, homodimer. The cofactor is Mg(2+). It depends on Mn(2+) as a cofactor. Thiamine diphosphate is required as a cofactor.

It catalyses the reaction isochorismate + 2-oxoglutarate + H(+) = 5-enolpyruvoyl-6-hydroxy-2-succinyl-cyclohex-3-ene-1-carboxylate + CO2. It participates in quinol/quinone metabolism; 1,4-dihydroxy-2-naphthoate biosynthesis; 1,4-dihydroxy-2-naphthoate from chorismate: step 2/7. The protein operates within quinol/quinone metabolism; menaquinone biosynthesis. In terms of biological role, catalyzes the thiamine diphosphate-dependent decarboxylation of 2-oxoglutarate and the subsequent addition of the resulting succinic semialdehyde-thiamine pyrophosphate anion to isochorismate to yield 2-succinyl-5-enolpyruvyl-6-hydroxy-3-cyclohexene-1-carboxylate (SEPHCHC). The sequence is that of 2-succinyl-5-enolpyruvyl-6-hydroxy-3-cyclohexene-1-carboxylate synthase from Pectobacterium carotovorum subsp. carotovorum (strain PC1).